A 1215-amino-acid polypeptide reads, in one-letter code: DNA-directed RNA polymerase subunit beta' (1215 aa).

The Zn(2+) site is built by cysteine 60, cysteine 62, cysteine 75, and cysteine 78. Positions 450, 452, and 454 each coordinate Mg(2+). Residues cysteine 818, cysteine 892, cysteine 899, and cysteine 902 each contribute to the Zn(2+) site.

This sequence belongs to the RNA polymerase beta' chain family. As to quaternary structure, the RNAP catalytic core consists of 2 alpha, 1 beta, 1 beta' and 1 omega subunit. When a sigma factor is associated with the core the holoenzyme is formed, which can initiate transcription. The cofactor is Mg(2+). It depends on Zn(2+) as a cofactor.

The catalysed reaction is RNA(n) + a ribonucleoside 5'-triphosphate = RNA(n+1) + diphosphate. Functionally, DNA-dependent RNA polymerase catalyzes the transcription of DNA into RNA using the four ribonucleoside triphosphates as substrates. This chain is DNA-directed RNA polymerase subunit beta', found in Streptococcus sanguinis (strain SK36).